The sequence spans 335 residues: Aliphatic sulfonates import ATP-binding protein SsuB (335 aa).

The disordered stretch occupies residues 29 to 61 (DGDAQDAAVYERDGGAHAPPFASGGAPPDGDRA). One can recognise an ABC transporter domain in the interval 74-293 (VRLTRVSKRY…ARASAAFAAL (220 aa)). 106-113 (GRSGCGKS) is a binding site for ATP. Residues 308-335 (APAAPNAAGPEGASRGRAAPASGLRWAV) form a disordered region.

The protein belongs to the ABC transporter superfamily. Aliphatic sulfonates importer (TC 3.A.1.17.2) family. In terms of assembly, the complex is composed of two ATP-binding proteins (SsuB), two transmembrane proteins (SsuC) and a solute-binding protein (SsuA).

It is found in the cell inner membrane. It catalyses the reaction ATP + H2O + aliphatic sulfonate-[sulfonate-binding protein]Side 1 = ADP + phosphate + aliphatic sulfonateSide 2 + [sulfonate-binding protein]Side 1.. In terms of biological role, part of the ABC transporter complex SsuABC involved in aliphatic sulfonates import. Responsible for energy coupling to the transport system. This is Aliphatic sulfonates import ATP-binding protein SsuB from Burkholderia pseudomallei (strain 1710b).